The sequence spans 190 residues: Protein GrpE (190 aa).

Polar residues predominate over residues 1 to 18; that stretch reads MTETPNTSSEEIQTSEPS. Residues 1-21 are disordered; sequence MTETPNTSSEEIQTSEPSPDN.

This sequence belongs to the GrpE family. Homodimer.

It is found in the cytoplasm. Functionally, participates actively in the response to hyperosmotic and heat shock by preventing the aggregation of stress-denatured proteins, in association with DnaK and GrpE. It is the nucleotide exchange factor for DnaK and may function as a thermosensor. Unfolded proteins bind initially to DnaJ; upon interaction with the DnaJ-bound protein, DnaK hydrolyzes its bound ATP, resulting in the formation of a stable complex. GrpE releases ADP from DnaK; ATP binding to DnaK triggers the release of the substrate protein, thus completing the reaction cycle. Several rounds of ATP-dependent interactions between DnaJ, DnaK and GrpE are required for fully efficient folding. This is Protein GrpE from Chlamydia trachomatis serovar A (strain ATCC VR-571B / DSM 19440 / HAR-13).